A 347-amino-acid chain; its full sequence is GMP reductase (347 aa).

108 to 131 provides a ligand contact to NADP(+); the sequence is ADFEKTKQILDLNPALNFVCIDVA. 2 residues coordinate K(+): Gly-181 and Gly-183. The Thioimidate intermediate role is filled by Cys-186. 216–239 is an NADP(+) binding site; sequence IVSDGGCTTPGDVAKAFGGGADFV.

Belongs to the IMPDH/GMPR family. GuaC type 1 subfamily. Homotetramer.

The enzyme catalyses IMP + NH4(+) + NADP(+) = GMP + NADPH + 2 H(+). Catalyzes the irreversible NADPH-dependent deamination of GMP to IMP. It functions in the conversion of nucleobase, nucleoside and nucleotide derivatives of G to A nucleotides, and in maintaining the intracellular balance of A and G nucleotides. This chain is GMP reductase, found in Escherichia coli (strain SMS-3-5 / SECEC).